The following is a 353-amino-acid chain: Quinolinate synthase (353 aa).

Iminosuccinate is bound by residues H47 and S68. C113 contributes to the [4Fe-4S] cluster binding site. Residues 139 to 141 and S156 contribute to the iminosuccinate site; that span reads YAN. Position 200 (C200) interacts with [4Fe-4S] cluster. Residues 226-228 and T243 each bind iminosuccinate; that span reads HPE. Residue C297 coordinates [4Fe-4S] cluster.

The protein belongs to the quinolinate synthase family. Type 1 subfamily. [4Fe-4S] cluster is required as a cofactor.

The protein resides in the cytoplasm. The catalysed reaction is iminosuccinate + dihydroxyacetone phosphate = quinolinate + phosphate + 2 H2O + H(+). It functions in the pathway cofactor biosynthesis; NAD(+) biosynthesis; quinolinate from iminoaspartate: step 1/1. Functionally, catalyzes the condensation of iminoaspartate with dihydroxyacetone phosphate to form quinolinate. This chain is Quinolinate synthase, found in Yersinia pseudotuberculosis serotype O:3 (strain YPIII).